The primary structure comprises 575 residues: MLSRLLPFLVTISSLSLEFIAYGTELPSPSYVWFEARFFQHILHWKPIPNQSESTYYEVALKQYGNSTWNDIHICRKAQALSCDLTTFTLDLYHRSYGYRARVRAVDNSQYSNWTTTETRFTVDEVILTVDSVTLKAMDGIIYGTIHPPRPTITPAGDEYEQVFKDLRVYKISIRKFSELKNATKRVKQETFTLTVPIGVRKFCVKVLPRLESRINKAEWSEEQCLLITTEQYFTVTNLSILVISMLLFCGILVCLVLQWYIRHPGKLPTVLVFKKPHDFFPANPLCPETPDAIHIVDLEVFPKVSLELRDSVLHGSTDSGFGSGKPSLQTEESQFLLPGSHPQIQGTLGKEESPGLQATCGDNTDSGICLQEPGLHSSMGPAWKQQLGYTHQDQDDSDVNLVQNSPGQPKYTQDASALGHVCLLEPKAPEEKDQVMVTFQGYQKQTRWKAEAAGPAECLDEEIPLTDAFDPELGVHLQDDLAWPPPALAAGYLKQESQGMASAPPGTPSRQWNQLTEEWSLLGVVSCEDLSIESWRFAHKLDPLDCGAAPGGLLDSLGSNLVTLPLISSLQVEE.

Positions Met1–Ser16 are cleaved as a signal peptide. The Extracellular segment spans residues Leu17–Ile241. 4 N-linked (GlcNAc...) asparagine glycosylation sites follow: Asn50, Asn66, Asn113, and Asn182. A disulfide bridge connects residues Cys204 and Cys225. A glycan (N-linked (GlcNAc...) asparagine) is linked at Asn238. A helical transmembrane segment spans residues Leu242–Ile262. The Cytoplasmic portion of the chain corresponds to Arg263–Glu575. 2 positions are modified to phosphotyrosine: Tyr443 and Tyr493.

The protein belongs to the type II cytokine receptor family. In terms of assembly, interacts with IL10. Interacts with IL10RB. Interacts (via its cytoplasmic domain) with JAK1 (via N-terminus). Interacts with BTRC; this interaction leads to IL10RA ubiquitination and subsequent degradation. Interacts with STAT3. In terms of processing, phosphorylated. Phosphorylation of the cytoplasmic tail induced STAT3 activation. Post-translationally, ubiquitinated by BTRC; ubiquitination leads to endocytosis and subsequent degradation of IL10RA.

It localises to the cell membrane. Its subcellular location is the cytoplasm. Its function is as follows. Cell surface receptor for the cytokine IL10 that participates in IL10-mediated anti-inflammatory functions, limiting excessive tissue disruption caused by inflammation. Upon binding to IL10, induces a conformational change in IL10RB, allowing IL10RB to bind IL10 as well. In turn, the heterotetrameric assembly complex, composed of two subunits of IL10RA and IL10RB, activates the kinases JAK1 and TYK2 that are constitutively associated with IL10RA and IL10RB respectively. These kinases then phosphorylate specific tyrosine residues in the intracellular domain in IL10RA leading to the recruitment and subsequent phosphorylation of STAT3. Once phosphorylated, STAT3 homodimerizes, translocates to the nucleus and activates the expression of anti-inflammatory genes. In addition, IL10RA-mediated activation of STAT3 inhibits starvation-induced autophagy. This is Interleukin-10 receptor subunit alpha (Il10ra) from Mus musculus (Mouse).